The chain runs to 606 residues: MACPF domain-containing protein At4g24290 (606 aa).

An MACPF domain is found at 1 to 332; it reads MALRLPASKA…PPIEELHQFL (332 aa).

It belongs to the complement C6/C7/C8/C9 (TC 1.C.39) family.

Negatively controls the salicylic acid (SA)-mediated pathway of programmed cell death in plant immunity. The chain is MACPF domain-containing protein At4g24290 from Arabidopsis thaliana (Mouse-ear cress).